The chain runs to 177 residues: Small ribosomal subunit protein uS5 (177 aa).

The region spanning 14 to 77 (LQEKLITVNR…EKARHNMIDI (64 aa)) is the S5 DRBM domain.

The protein belongs to the universal ribosomal protein uS5 family. In terms of assembly, part of the 30S ribosomal subunit. Contacts proteins S4 and S8.

Its function is as follows. With S4 and S12 plays an important role in translational accuracy. Located at the back of the 30S subunit body where it stabilizes the conformation of the head with respect to the body. The protein is Small ribosomal subunit protein uS5 of Blochmanniella floridana.